A 130-amino-acid chain; its full sequence is Small ribosomal subunit protein uS8 (130 aa).

Belongs to the universal ribosomal protein uS8 family. As to quaternary structure, part of the 30S ribosomal subunit.

Its function is as follows. One of the primary rRNA binding proteins, it binds directly to 16S rRNA central domain where it helps coordinate assembly of the platform of the 30S subunit. The polypeptide is Small ribosomal subunit protein uS8 (Pyrobaculum neutrophilum (strain DSM 2338 / JCM 9278 / NBRC 100436 / V24Sta) (Thermoproteus neutrophilus)).